Consider the following 236-residue polypeptide: Lipoarabinomannan carrier protein LprG (236 aa).

Positions 1–26 (MRTPRRHCRRIAVLAAVSIAATVVAG) are cleaved as a signal peptide. Cys27 carries N-palmitoyl cysteine lipidation. Residue Cys27 is the site of S-diacylglycerol cysteine attachment.

The protein belongs to the LppX/LprAFG lipoprotein family. In terms of processing, modified by Lgt on Cys-27 with an S-linked diacylglyceral, signal peptide is removed by LspA, Cys-27 is further modifed with a fatty acid on its amino group by Lnt yielding a triacylated protein.

The protein localises to the cell inner membrane. Its subcellular location is the secreted. It is found in the cell wall. Its function is as follows. Helps membrane protein Mb1445c (P55) transport triacylglycerides (TAG) across the inner cell membrane into the periplasm and probably ultimately to the outer membrane. Binds TAG in its hydrophobic cavity and transfers it between lipid bilayers. TAG probably regulates lipid metabolism and growth regulation and plays a structural role in the outer membrane. Binds di- and triacylated phosphatidyl-myo-inositol mannosides (PIMs), and glycolipid lipoglycan modulins lipoarabinomannan (LAM) and lipomannan (LM), facilitating their recognition by TLR2. Required for activity of drug efflux transporter Mb1445c. Required, probably with Mb1445c, for normal surface localization of LAM. In terms of biological role, constitutes a host TLR2 agonist (toll-like receptor). The sequence is that of Lipoarabinomannan carrier protein LprG from Mycobacterium bovis (strain ATCC BAA-935 / AF2122/97).